Consider the following 306-residue polypeptide: Ribonuclease Z (306 aa).

Zn(2+) is bound by residues H62, H64, D66, H67, H138, D209, and H267. D66 (proton acceptor) is an active-site residue.

This sequence belongs to the RNase Z family. Homodimer. Requires Zn(2+) as cofactor.

It catalyses the reaction Endonucleolytic cleavage of RNA, removing extra 3' nucleotides from tRNA precursor, generating 3' termini of tRNAs. A 3'-hydroxy group is left at the tRNA terminus and a 5'-phosphoryl group is left at the trailer molecule.. Zinc phosphodiesterase, which displays some tRNA 3'-processing endonuclease activity. Probably involved in tRNA maturation, by removing a 3'-trailer from precursor tRNA. The chain is Ribonuclease Z from Archaeoglobus fulgidus (strain ATCC 49558 / DSM 4304 / JCM 9628 / NBRC 100126 / VC-16).